The following is a 391-amino-acid chain: Processive diacylglycerol beta-glucosyltransferase (391 aa).

The protein belongs to the glycosyltransferase 28 family. UgtP subfamily.

Its subcellular location is the cell membrane. It catalyses the reaction a 1,2-diacyl-3-O-(beta-D-glucopyranosyl)-sn-glycerol + UDP-alpha-D-glucose = a 1,2-diacyl-3-O-(beta-D-Glc-(1-&gt;6)-beta-D-Glc)-sn-glycerol + UDP + H(+). It carries out the reaction a 1,2-diacyl-sn-glycerol + UDP-alpha-D-glucose = a 1,2-diacyl-3-O-(beta-D-glucopyranosyl)-sn-glycerol + UDP + H(+). It participates in glycolipid metabolism; diglucosyl-diacylglycerol biosynthesis. In terms of biological role, processive glucosyltransferase involved in the biosynthesis of both the bilayer- and non-bilayer-forming membrane glucolipids. Is able to successively transfer two glucosyl residues to diacylglycerol (DAG), thereby catalyzing the formation of beta-monoglucosyl-DAG (3-O-(beta-D-glucopyranosyl)-1,2-diacyl-sn-glycerol) and beta-diglucosyl-DAG (3-O-(beta-D-glucopyranosyl-beta-(1-&gt;6)-D-glucopyranosyl)-1,2-diacyl-sn-glycerol). Beta-diglucosyl-DAG is the predominant glycolipid found in Bacillales and is also used as a membrane anchor for lipoteichoic acid (LTA). The sequence is that of Processive diacylglycerol beta-glucosyltransferase from Staphylococcus haemolyticus (strain JCSC1435).